Reading from the N-terminus, the 308-residue chain is Glycerol-3-phosphate dehydrogenase [NAD(P)+] (308 aa).

Trp13, Arg33, and Lys81 together coordinate NADPH. Sn-glycerol 3-phosphate-binding residues include Lys81 and Gly109. Ala113 is a binding site for NADPH. Sn-glycerol 3-phosphate is bound by residues Lys163, Asp216, Ser226, Arg227, and Asn228. Lys163 acts as the Proton acceptor in catalysis. Arg227 contributes to the NADPH binding site. Residue Glu253 coordinates NADPH.

The protein belongs to the NAD-dependent glycerol-3-phosphate dehydrogenase family.

It localises to the cytoplasm. It carries out the reaction sn-glycerol 3-phosphate + NAD(+) = dihydroxyacetone phosphate + NADH + H(+). The enzyme catalyses sn-glycerol 3-phosphate + NADP(+) = dihydroxyacetone phosphate + NADPH + H(+). It functions in the pathway membrane lipid metabolism; glycerophospholipid metabolism. Functionally, catalyzes the reduction of the glycolytic intermediate dihydroxyacetone phosphate (DHAP) to sn-glycerol 3-phosphate (G3P), the key precursor for phospholipid synthesis. The chain is Glycerol-3-phosphate dehydrogenase [NAD(P)+] from Thermosynechococcus vestitus (strain NIES-2133 / IAM M-273 / BP-1).